A 635-amino-acid polypeptide reads, in one-letter code: DNA-directed RNA polymerase subunit gamma (635 aa).

Cys74, Cys76, Cys89, and Cys92 together coordinate Zn(2+). Mg(2+) is bound by residues Asp471, Asp473, and Asp475.

It belongs to the RNA polymerase beta' chain family. RpoC1 subfamily. As to quaternary structure, in cyanobacteria the RNAP catalytic core is composed of 2 alpha, 1 beta, 1 beta', 1 gamma and 1 omega subunit. When a sigma factor is associated with the core the holoenzyme is formed, which can initiate transcription. The cofactor is Mg(2+). Zn(2+) is required as a cofactor.

It catalyses the reaction RNA(n) + a ribonucleoside 5'-triphosphate = RNA(n+1) + diphosphate. DNA-dependent RNA polymerase catalyzes the transcription of DNA into RNA using the four ribonucleoside triphosphates as substrates. The protein is DNA-directed RNA polymerase subunit gamma of Prochlorococcus marinus (strain NATL1A).